The following is a 271-amino-acid chain: MNNNSSSLSIGNKLFKSRLLIGTGKYQTLNQMQESIINSECEIVTVAVRRVQSSESSHKGLMEAIDWKKLWMLPNTAGCTNSEEAIRIAKMGRELAKLSGQEDNNFVKLEVIPDNRYLLPDPFGTLEAAEALIKEGFVVMPYINADPLLAKRLENIGCSCVMPLGSAIGSAQGIRNESNIRIIIENSNVPVIVDAGIGVPSHAAEAMEMGADAVLINSAIALAKDPKSMAEGMCKGVHAGRKAFLAGRLVEQPLANPSSPCTEISKSSYVQ.

The active-site Schiff-base intermediate with DXP is lysine 108. Residues glycine 169, 195–196, and 217–218 each bind 1-deoxy-D-xylulose 5-phosphate; these read AG and NS.

The protein belongs to the ThiG family. As to quaternary structure, homotetramer. Forms heterodimers with either ThiH or ThiS.

Its subcellular location is the cytoplasm. It carries out the reaction [ThiS sulfur-carrier protein]-C-terminal-Gly-aminoethanethioate + 2-iminoacetate + 1-deoxy-D-xylulose 5-phosphate = [ThiS sulfur-carrier protein]-C-terminal Gly-Gly + 2-[(2R,5Z)-2-carboxy-4-methylthiazol-5(2H)-ylidene]ethyl phosphate + 2 H2O + H(+). Its pathway is cofactor biosynthesis; thiamine diphosphate biosynthesis. Functionally, catalyzes the rearrangement of 1-deoxy-D-xylulose 5-phosphate (DXP) to produce the thiazole phosphate moiety of thiamine. Sulfur is provided by the thiocarboxylate moiety of the carrier protein ThiS. In vitro, sulfur can be provided by H(2)S. This Prochlorococcus marinus (strain SARG / CCMP1375 / SS120) protein is Thiazole synthase.